Consider the following 182-residue polypeptide: Putative manganese efflux pump MntP (182 aa).

Transmembrane regions (helical) follow at residues 6–26, 37–57, 59–79, 104–126, 131–149, and 164–181; these read TVLV…GVGT, LSFH…FVGS, AADL…LFIG, SSLV…SFGI, LFLS…TWGA, and METV…KLLL.

This sequence belongs to the MntP (TC 9.B.29) family.

It localises to the cell inner membrane. Its function is as follows. Probably functions as a manganese efflux pump. This chain is Putative manganese efflux pump MntP, found in Syntrophobacter fumaroxidans (strain DSM 10017 / MPOB).